A 771-amino-acid polypeptide reads, in one-letter code: Probable exo-1,4-beta-xylosidase bxlB (771 aa).

The first 25 residues, 1-25 (MAHITSWHYGNAIALLVSLAPGALS), serve as a signal peptide directing secretion. N67 carries N-linked (GlcNAc...) asparagine glycosylation. Residue D293 is part of the active site. 4 N-linked (GlcNAc...) asparagine glycosylation sites follow: N305, N345, N423, and N464.

The protein belongs to the glycosyl hydrolase 3 family.

It is found in the secreted. It catalyses the reaction Hydrolysis of (1-&gt;4)-beta-D-xylans, to remove successive D-xylose residues from the non-reducing termini.. Its pathway is glycan degradation; xylan degradation. In terms of biological role, xylan 1,4-beta-xylosidase involved in the hydrolysis of xylan, a major structural heterogeneous polysaccharide found in plant biomass representing the second most abundant polysaccharide in the biosphere, after cellulose. The chain is Probable exo-1,4-beta-xylosidase bxlB (bxlB) from Aspergillus fumigatus (strain CBS 144.89 / FGSC A1163 / CEA10) (Neosartorya fumigata).